Reading from the N-terminus, the 130-residue chain is Small ribosomal subunit protein uS11c (130 aa).

It belongs to the universal ribosomal protein uS11 family. In terms of assembly, part of the 30S ribosomal subunit.

Its subcellular location is the plastid. It localises to the chloroplast. This is Small ribosomal subunit protein uS11c from Drimys granadensis.